Consider the following 562-residue polypeptide: Arginine--tRNA ligase 1 (562 aa).

The 'HIGH' region motif lies at 122 to 132 (PNIAKPFSMGH).

Belongs to the class-I aminoacyl-tRNA synthetase family. Monomer.

The protein localises to the cytoplasm. The enzyme catalyses tRNA(Arg) + L-arginine + ATP = L-arginyl-tRNA(Arg) + AMP + diphosphate. This chain is Arginine--tRNA ligase 1, found in Bacillus thuringiensis subsp. konkukian (strain 97-27).